Here is a 417-residue protein sequence, read N- to C-terminus: MGVINVQGSPSFSIHSSESNLRKSRALKKPFCSIRNRVYCAQSSSAAVDESKNITMGDSFIRPHLRQLAAYQPILPFEVLSAQLGRKPEDIVKLDANENPYGPPPEVFEALGNMKFPYVYPDPQSRRLRDALAQDSGLESEYILVGCGADELIDLIMRCVLDPGEKIIDCPPTFSMYVFDAAVNGAGVIKVPRNPDFSLNVDRIAEVVELEKPKCIFLTSPNNPDGSIISEDDLLKILEMPILVVLDEAYIEFSGVESRMKWVKKYENLIVLRTFSKRAGLAGLRVGYGAFPLSIIEYLWRAKQPYNVSVAGEVAALAALSNGKYLEDVRDALVRERERLFGLLKEVPFLNPYPSYSNFILCEVTSGMDAKKLKEDLAKMGVMVRHYNSQELKGYVRVSAGKPEHTDVLMECLKQFY.

The transit peptide at 1–40 (MGVINVQGSPSFSIHSSESNLRKSRALKKPFCSIRNRVYC) directs the protein to the chloroplast. The residue at position 41 (A41) is an N-acetylalanine. The residue at position 277 (K277) is an N6-(pyridoxal phosphate)lysine.

Belongs to the class-II pyridoxal-phosphate-dependent aminotransferase family. Histidinol-phosphate aminotransferase subfamily. As to quaternary structure, homodimer. The cofactor is pyridoxal 5'-phosphate. In terms of tissue distribution, expressed in both vegetative and reproductive tissues.

Its subcellular location is the plastid. The protein localises to the chloroplast. It catalyses the reaction L-histidinol phosphate + 2-oxoglutarate = 3-(imidazol-4-yl)-2-oxopropyl phosphate + L-glutamate. It participates in amino-acid biosynthesis; L-histidine biosynthesis; L-histidine from 5-phospho-alpha-D-ribose 1-diphosphate: step 7/9. The protein is Histidinol-phosphate aminotransferase 1, chloroplastic (HISN6A) of Arabidopsis thaliana (Mouse-ear cress).